The chain runs to 312 residues: MARTDDDNWDLTSSVGVTATIVAVGRALATKDPRGLINDPFAEPLVRAVGLDLFTKMMDGELDMSTIADVSPAVAQAMVYGNAVRTKYFDDYLLNATAGGIRQVAILASGLDSRAYRLPWPTRTVVYEIDQPKVMEFKTTTLADLGAEPSAIRRAVPIDLRADWPTALQAAGFDSAAPTAWLAEGLLIYLKPQTQDRLFDNITALSAPGSMVATEFVTGIADFSAERARTISNPFRCHGVDVDLASLVYTGPRNHVLDYLAAKGWQPEGVSLAELFRRSGLDVRAADDDTIFISGCLTDHSSISPPTAAGWR.

S-adenosyl-L-methionine contacts are provided by residues aspartate 130 and 159–160 (DL).

The protein belongs to the UPF0677 family.

Its function is as follows. Exhibits S-adenosyl-L-methionine-dependent methyltransferase activity. This is Putative S-adenosyl-L-methionine-dependent methyltransferase BCG_1768c from Mycobacterium bovis (strain BCG / Pasteur 1173P2).